An 89-amino-acid chain; its full sequence is Small ribosomal subunit protein uS19 (89 aa).

Belongs to the universal ribosomal protein uS19 family.

Functionally, protein S19 forms a complex with S13 that binds strongly to the 16S ribosomal RNA. This Brachyspira hyodysenteriae (strain ATCC 49526 / WA1) protein is Small ribosomal subunit protein uS19.